Here is a 74-residue protein sequence, read N- to C-terminus: Conotoxin Im6.10 (74 aa).

Positions 1–19 (MKTGMIICLLLIAFMDADG) are cleaved as a signal peptide. The propeptide occupies 20-47 (SPGDTLYSQKTADTDSGMKRFQKTFQKR). 3 cysteine pairs are disulfide-bonded: C49–C58, C52–C63, and C57–C73.

In terms of tissue distribution, expressed by the venom duct.

The protein localises to the secreted. Functionally, probable neurotoxin. The protein is Conotoxin Im6.10 of Conus imperialis (Imperial cone).